Consider the following 599-residue polypeptide: Spermatogenesis-associated protein 7 (599 aa).

Positions K163 to S205 are disordered. Positions K166–N175 are enriched in polar residues.

In terms of assembly, found in a complex with CFAP410, NEK1 and SPATA7. Interacts with NEK1. Interacts with RPGRIP1. Interacts with RPGR. Interacts with NPHP4. Interacts with NPHP1. Interacts with AHI1.

The protein resides in the cytoplasm. It localises to the cytoskeleton. It is found in the cilium axoneme. The protein localises to the cilium basal body. Its subcellular location is the cell projection. The protein resides in the cilium. It localises to the photoreceptor outer segment. Involved in the maintenance of both rod and cone photoreceptor cells. It is required for recruitment and proper localization of RPGRIP1 to the photoreceptor connecting cilium (CC), as well as photoreceptor-specific localization of proximal CC proteins at the distal CC. Maintenance of protein localization at the photoreceptor-specific distal CC is essential for normal microtubule stability and to prevent photoreceptor degeneration. The protein is Spermatogenesis-associated protein 7 (SPATA7) of Homo sapiens (Human).